Consider the following 569-residue polypeptide: Myotubularin-related protein 9 (569 aa).

One can recognise a Myotubularin phosphatase domain in the interval 134 to 513 (GWSAFDLEQE…QCIKIWDRLF (380 aa)).

This sequence belongs to the protein-tyrosine phosphatase family. Non-receptor class myotubularin subfamily. Heterodimer with lipid phosphatase mtm-6.

The protein resides in the cytoplasm. Its subcellular location is the membrane. May act as a regulatory subunit for mtm-6. In association with phosphatase mtm-6, plays a role in endosome trafficking probably by regulating phosphatidylinositol-3-phosphate levels. Regulates fluid phase endocytosis in coelomocytes. Regulates posterior migration of QL neuroblast descendants and the anterior migration of QR neuroblast descendants and HSN neurons during larval development probably by controlling Wnt ligand secretion through the regulation of sorting receptor mig-14 trafficking. Involved in the formation of correct synapse number in DA9 motor neurons. The polypeptide is Myotubularin-related protein 9 (Caenorhabditis elegans).